Here is a 104-residue protein sequence, read N- to C-terminus: uncharacterized protein (104 aa).

The next 2 helical transmembrane spans lie at Leu-16–Tyr-36 and Gly-44–Ile-64.

It localises to the cell membrane. This is an uncharacterized protein from Bacillus anthracis.